A 1068-amino-acid chain; its full sequence is Protein AF-10 (1068 aa).

A PHD-type 1 zinc finger spans residues Ile-22–Gln-74. The segment at Arg-79–Val-112 adopts a C2HC pre-PHD-type zinc-finger fold. The segment at Val-80–Ala-287 is self-association. The segment at Ala-106 to Tyr-190 is required for interaction with histone H3. Residues Lys-135–Phe-198 form a PHD-type 2 zinc finger. Residues Asp-141 to Lys-233 form an interaction with FSTL3 region. Residues Arg-206–Thr-260 form a disordered region. A compositionally biased stretch (low complexity) spans Ser-211–His-222. Ser-217 is modified (phosphoserine). The segment covering Ser-223–Lys-240 has biased composition (basic and acidic residues). Ser-252 bears the Phosphoserine mark. Residue Lys-280 forms a Glycyl lysine isopeptide (Lys-Gly) (interchain with G-Cter in SUMO2) linkage. The segment covering Asn-291 to Lys-305 has biased composition (polar residues). The interval Asn-291–Ala-505 is disordered. Residues Asp-306–Gly-317 show a composition bias toward basic and acidic residues. Residues Arg-311–Leu-674 form a DNA-binding region. Residues Ser-352–Gln-372 show a composition bias toward low complexity. Composition is skewed to polar residues over residues Tyr-387–Thr-396 and Ser-404–Pro-446. Ser-436 bears the Phosphoserine mark. Residues Glu-465–Gly-483 are compositionally biased toward basic residues. Over residues Val-490–Ala-505 the composition is skewed to low complexity. Ser-532 is modified (phosphoserine). Low complexity predominate over residues Ser-583–Ser-594. Disordered stretches follow at residues Ser-583 to Pro-612 and Asn-660 to Asn-708. 2 stretches are compositionally biased toward polar residues: residues His-595–Leu-604 and Asn-660–Asn-673. Residues Leu-674–Leu-694 show a composition bias toward low complexity. Ser-684, Ser-686, and Ser-689 each carry phosphoserine. Residues Asn-703–Thr-784 form a transactivation domain; required for DOT1L-binding region. Residues Leu-750 to Leu-778 are leucine-zipper. Over residues Ala-800–Ser-814 the composition is skewed to polar residues. The tract at residues Ala-800 to Ser-865 is disordered. Low complexity-rich tracts occupy residues Leu-834–Ser-848 and Gln-855–Ser-865.

As to quaternary structure, self-associates. Interacts with FSTL3 isoform 2; the interaction enhances MLLT10 in vitro transcriptional activity and self-association. Interacts with YEATS4. Interacts with SS18. Interacts with DOT1L; this interaction also occurs with the KMT2A/MLL1 fusion protein. Interacts with histone H3; interaction is necessary for MLLT10 binding to nucleosomes; interaction is inhibited by histone H3 'Lys-27' methylations (H3K27me1, H3K27me2 and H3K27me3) amd acetylation; interaction stabilizes association of MLLT10 at chromatin; interaction is essential for histone H3 'Lys-79' dimethylation (H3K79me2). In terms of tissue distribution, expressed abundantly in testis.

The protein resides in the nucleus. In terms of biological role, probably involved in transcriptional regulation. In vitro or as fusion protein with KMT2A/MLL1 has transactivation activity. Binds to cruciform DNA. In cells, binding to unmodified histone H3 regulates DOT1L functions including histone H3 'Lys-79' dimethylation (H3K79me2) and gene activation. In Homo sapiens (Human), this protein is Protein AF-10.